Consider the following 337-residue polypeptide: tRNA N6-adenosine threonylcarbamoyltransferase (337 aa).

2 residues coordinate Fe cation: histidine 111 and histidine 115. Substrate is bound by residues 134 to 138 (LVSGG), aspartate 167, glycine 180, and asparagine 272. Aspartate 300 is a binding site for Fe cation.

The protein belongs to the KAE1 / TsaD family. The cofactor is Fe(2+).

Its subcellular location is the cytoplasm. It carries out the reaction L-threonylcarbamoyladenylate + adenosine(37) in tRNA = N(6)-L-threonylcarbamoyladenosine(37) in tRNA + AMP + H(+). Its function is as follows. Required for the formation of a threonylcarbamoyl group on adenosine at position 37 (t(6)A37) in tRNAs that read codons beginning with adenine. Is involved in the transfer of the threonylcarbamoyl moiety of threonylcarbamoyl-AMP (TC-AMP) to the N6 group of A37, together with TsaE and TsaB. TsaD likely plays a direct catalytic role in this reaction. The sequence is that of tRNA N6-adenosine threonylcarbamoyltransferase from Cronobacter sakazakii (strain ATCC BAA-894) (Enterobacter sakazakii).